We begin with the raw amino-acid sequence, 262 residues long: MTEIREFWDDVARSVAFLSRIPVPDRHFRGHDGGLGRAVRAFPLAGILIALPAAVTAVLLGAIHASSLFTAFLIVAAQATVTGALHEDGLADTADGFGGGRDRESALEIMKDSRIGTYGAVALILSFGIRVSALAAFLPLLTPTGGGVALLATAALSRAAMVWHWSRLPPARRDGVAAAAGAPEAPATSVALGSGVILALVLFFLSGIPTVAVLLSFGAFVLAVLSFTRIASRKLGGHTGDTIGATQQLTEVAVLGALALAI.

The next 4 helical transmembrane spans lie at 43-63 (PLAG…LGAI), 121-141 (VALI…LPLL), 145-165 (GGGV…VWHW), and 195-215 (GVIL…AVLL).

The protein belongs to the CobS family. Mg(2+) is required as a cofactor.

Its subcellular location is the cell inner membrane. The catalysed reaction is alpha-ribazole + adenosylcob(III)inamide-GDP = adenosylcob(III)alamin + GMP + H(+). The enzyme catalyses alpha-ribazole 5'-phosphate + adenosylcob(III)inamide-GDP = adenosylcob(III)alamin 5'-phosphate + GMP + H(+). Its pathway is cofactor biosynthesis; adenosylcobalamin biosynthesis; adenosylcobalamin from cob(II)yrinate a,c-diamide: step 7/7. In terms of biological role, joins adenosylcobinamide-GDP and alpha-ribazole to generate adenosylcobalamin (Ado-cobalamin). Also synthesizes adenosylcobalamin 5'-phosphate from adenosylcobinamide-GDP and alpha-ribazole 5'-phosphate. This Sinorhizobium medicae (strain WSM419) (Ensifer medicae) protein is Adenosylcobinamide-GDP ribazoletransferase.